A 312-amino-acid chain; its full sequence is Ribosomal RNA small subunit methyltransferase H (312 aa).

Residues 35–37, D55, F79, D101, and Q108 each bind S-adenosyl-L-methionine; that span reads GGH. The tract at residues 286–306 is disordered; it reads LKPSEHEVNENSRSRSSVLRV. Positions 287-298 are enriched in basic and acidic residues; that stretch reads KPSEHEVNENSR.

This sequence belongs to the methyltransferase superfamily. RsmH family.

The protein resides in the cytoplasm. It catalyses the reaction cytidine(1402) in 16S rRNA + S-adenosyl-L-methionine = N(4)-methylcytidine(1402) in 16S rRNA + S-adenosyl-L-homocysteine + H(+). Specifically methylates the N4 position of cytidine in position 1402 (C1402) of 16S rRNA. The protein is Ribosomal RNA small subunit methyltransferase H of Aeromonas hydrophila subsp. hydrophila (strain ATCC 7966 / DSM 30187 / BCRC 13018 / CCUG 14551 / JCM 1027 / KCTC 2358 / NCIMB 9240 / NCTC 8049).